The sequence spans 379 residues: UDP-4-amino-4-deoxy-L-arabinose--oxoglutarate aminotransferase (379 aa).

Lys182 is modified (N6-(pyridoxal phosphate)lysine).

It belongs to the DegT/DnrJ/EryC1 family. ArnB subfamily. Homodimer. It depends on pyridoxal 5'-phosphate as a cofactor.

The catalysed reaction is UDP-4-amino-4-deoxy-beta-L-arabinose + 2-oxoglutarate = UDP-beta-L-threo-pentopyranos-4-ulose + L-glutamate. It functions in the pathway nucleotide-sugar biosynthesis; UDP-4-deoxy-4-formamido-beta-L-arabinose biosynthesis; UDP-4-deoxy-4-formamido-beta-L-arabinose from UDP-alpha-D-glucuronate: step 2/3. Its pathway is bacterial outer membrane biogenesis; lipopolysaccharide biosynthesis. In terms of biological role, catalyzes the conversion of UDP-4-keto-arabinose (UDP-Ara4O) to UDP-4-amino-4-deoxy-L-arabinose (UDP-L-Ara4N). The modified arabinose is attached to lipid A and is required for resistance to polymyxin and cationic antimicrobial peptides. This Escherichia coli O8 (strain IAI1) protein is UDP-4-amino-4-deoxy-L-arabinose--oxoglutarate aminotransferase.